Reading from the N-terminus, the 708-residue chain is Polyribonucleotide nucleotidyltransferase (708 aa).

The Mg(2+) site is built by aspartate 488 and aspartate 494. In terms of domain architecture, KH spans 555–614 (PRIYTMKIPQKKIAEVIGKGGATIRQLTEETGTTIEIGDDGTIKIAATDGESAANAISRI). The S1 motif domain occupies 624 to 692 (GTIYEGKVVR…RQGRVRLSIK (69 aa)).

It belongs to the polyribonucleotide nucleotidyltransferase family. Component of the RNA degradosome, which is a multiprotein complex involved in RNA processing and mRNA degradation. Mg(2+) serves as cofactor.

It localises to the cytoplasm. It catalyses the reaction RNA(n+1) + phosphate = RNA(n) + a ribonucleoside 5'-diphosphate. Functionally, involved in mRNA degradation. Catalyzes the phosphorolysis of single-stranded polyribonucleotides processively in the 3'- to 5'-direction. This chain is Polyribonucleotide nucleotidyltransferase, found in Pseudoalteromonas translucida (strain TAC 125).